The sequence spans 488 residues: Glutamyl-tRNA(Gln) amidotransferase subunit A (488 aa).

Active-site charge relay system residues include Lys77 and Ser152. Residue Ser176 is the Acyl-ester intermediate of the active site.

Belongs to the amidase family. GatA subfamily. In terms of assembly, heterotrimer of A, B and C subunits.

The catalysed reaction is L-glutamyl-tRNA(Gln) + L-glutamine + ATP + H2O = L-glutaminyl-tRNA(Gln) + L-glutamate + ADP + phosphate + H(+). Allows the formation of correctly charged Gln-tRNA(Gln) through the transamidation of misacylated Glu-tRNA(Gln) in organisms which lack glutaminyl-tRNA synthetase. The reaction takes place in the presence of glutamine and ATP through an activated gamma-phospho-Glu-tRNA(Gln). The sequence is that of Glutamyl-tRNA(Gln) amidotransferase subunit A from Streptococcus equi subsp. zooepidemicus (strain MGCS10565).